Here is a 746-residue protein sequence, read N- to C-terminus: Ring assembly protein 3 (746 aa).

It is found in the cytoplasm. Functionally, essential for actinomyosin ring assembly during cytokinesis. Has a role, in conjunction with F-actin, in assembling myosin II-containing proteins, such as myo2, at the division site. The chain is Ring assembly protein 3 (rng3) from Schizosaccharomyces pombe (strain 972 / ATCC 24843) (Fission yeast).